A 641-amino-acid polypeptide reads, in one-letter code: Toxin TseL (641 aa).

In terms of assembly, interacts with VgrG3; this interaction allows TseL secretion to target cells.

The protein localises to the secreted. Toxin secreted by the type VI (T6SS) secretion system that acts on prokaryotic as well as eukaryotic target cells. This Vibrio cholerae serotype O1 (strain ATCC 39315 / El Tor Inaba N16961) protein is Toxin TseL.